Reading from the N-terminus, the 616-residue chain is Dihydroxy-acid dehydratase (616 aa).

Position 81 (Asp-81) interacts with Mg(2+). [2Fe-2S] cluster is bound at residue Cys-122. Positions 123 and 124 each coordinate Mg(2+). Position 124 is an N6-carboxylysine (Lys-124). Position 195 (Cys-195) interacts with [2Fe-2S] cluster. Glu-491 is a Mg(2+) binding site. The active-site Proton acceptor is Ser-517.

It belongs to the IlvD/Edd family. As to quaternary structure, homodimer. The cofactor is [2Fe-2S] cluster. Mg(2+) serves as cofactor.

The enzyme catalyses (2R)-2,3-dihydroxy-3-methylbutanoate = 3-methyl-2-oxobutanoate + H2O. It catalyses the reaction (2R,3R)-2,3-dihydroxy-3-methylpentanoate = (S)-3-methyl-2-oxopentanoate + H2O. The protein operates within amino-acid biosynthesis; L-isoleucine biosynthesis; L-isoleucine from 2-oxobutanoate: step 3/4. It functions in the pathway amino-acid biosynthesis; L-valine biosynthesis; L-valine from pyruvate: step 3/4. Its function is as follows. Functions in the biosynthesis of branched-chain amino acids. Catalyzes the dehydration of (2R,3R)-2,3-dihydroxy-3-methylpentanoate (2,3-dihydroxy-3-methylvalerate) into 2-oxo-3-methylpentanoate (2-oxo-3-methylvalerate) and of (2R)-2,3-dihydroxy-3-methylbutanoate (2,3-dihydroxyisovalerate) into 2-oxo-3-methylbutanoate (2-oxoisovalerate), the penultimate precursor to L-isoleucine and L-valine, respectively. The polypeptide is Dihydroxy-acid dehydratase (Escherichia coli O127:H6 (strain E2348/69 / EPEC)).